Here is an 801-residue protein sequence, read N- to C-terminus: Sucrose synthase isoform 2 (801 aa).

Positions 271 to 748 (MIFNVVILSP…GLKRIQEKYT (478 aa)) are GT-B glycosyltransferase.

The protein belongs to the glycosyltransferase 1 family. Plant sucrose synthase subfamily. Homotetramer. Exclusively expressed in flowers.

It catalyses the reaction an NDP-alpha-D-glucose + D-fructose = a ribonucleoside 5'-diphosphate + sucrose + H(+). In terms of biological role, sucrose-cleaving enzyme that provides UDP-glucose and fructose for various metabolic pathways. This Daucus carota (Wild carrot) protein is Sucrose synthase isoform 2.